The primary structure comprises 299 residues: MKPDAHQVKQFLLNLQDTICQQLTAVDGAEFVEDSWQREGGGGGRSRVLRNGGVFEQAGVNFSHVHGEAMPASATAHRPELAGRSFEAMGVSLVVHPHNPYVPTSHANVRFFIAEKPGAEPVWWFGGGFDLTPFYGFEEDAIHWHRTARDLCLPFGKDVYPRYKKWCDDYFYLKHRNEQRGIGGLFFDDLNTPDFDHCFAFMQAVGKGYTDAYLPIVERRKAMAYGERERNFQLYRRGRYVEFNLVWDRGTLFGLQTGGRTESILMSMPPLVRWEYDYQPKDGSPEAALSEFIKVRDWV.

Position 92 (S92) interacts with substrate. Mn(2+) contacts are provided by H96 and H106. The Proton donor role is filled by H106. 108–110 (NVR) serves as a coordination point for substrate. Mn(2+) is bound by residues H145 and H175. The segment at 240 to 275 (YVEFNLVWDRGTLFGLQTGGRTESILMSMPPLVRWE) is important for dimerization. 258 to 260 (GGR) is a substrate binding site.

This sequence belongs to the aerobic coproporphyrinogen-III oxidase family. Homodimer. Mn(2+) is required as a cofactor.

The protein resides in the cytoplasm. The enzyme catalyses coproporphyrinogen III + O2 + 2 H(+) = protoporphyrinogen IX + 2 CO2 + 2 H2O. The protein operates within porphyrin-containing compound metabolism; protoporphyrin-IX biosynthesis; protoporphyrinogen-IX from coproporphyrinogen-III (O2 route): step 1/1. Involved in the heme biosynthesis. Catalyzes the aerobic oxidative decarboxylation of propionate groups of rings A and B of coproporphyrinogen-III to yield the vinyl groups in protoporphyrinogen-IX. The chain is Oxygen-dependent coproporphyrinogen-III oxidase from Escherichia coli O157:H7.